We begin with the raw amino-acid sequence, 3421 residues long: Large tegument protein deneddylase (3421 aa).

The segment at 1–248 (MAQTLVPANK…SETYLSDEQY (248 aa)) is deubiquitination activity. One can recognise a Peptidase C76 domain in the interval 19 to 238 (VVIGYRNQYD…ISATSLLYGI (220 aa)). Residues Cys39, Asp172, and His174 contribute to the active site. Residues 311–351 (QPTEKRVSLPKRRRPPWTPPTSSENLTTSGNTHTVAGRPSQ) form a disordered region. Positions 332 to 344 (SSENLTTSGNTHT) are enriched in polar residues. Residues 482 to 508 (LEQFITMIFNRLLSFLVENGARTRTDS) form an interaction with inner tegument protein region. 2 disordered regions span residues 2407 to 2442 (ESNP…PTGI) and 2479 to 3195 (SNAM…RKNI). Low complexity predominate over residues 2415-2432 (SHDSSQSLDVPSSPSSGS). Pro residues-rich tracts occupy residues 2506-2516 (TLPPKAAPLPP), 2541-2556 (PSVP…PPLP), 2565-2577 (GPPP…PPLP), 2586-2598 (GPPP…PPLP), and 2607-2619 (GPPP…PPLP). Composition is skewed to polar residues over residues 2620-2637 (QSTS…SGKT) and 2778-2787 (SDSNVTQSTK). The segment covering 2797–2857 (PAAAPAKSAA…SAAAPAAAPA (61 aa)) has biased composition (low complexity). Basic and acidic residues predominate over residues 2869 to 2895 (KPAKDQAKDQAKDQAKDQAKDQAKDQA). Over residues 2953-2969 (LSASKNSHTTDAVSSDR) the composition is skewed to polar residues. Basic and acidic residues-rich tracts occupy residues 3023–3040 (RKSD…RRAF) and 3088–3097 (CSEEPKRPTG). The segment covering 3120-3146 (IPQNQNTSESPRTTSLKSPTRTVQSSM) has biased composition (polar residues). Positions 3171–3188 (PQPPPANQTPPPQEPPAP) are enriched in pro residues.

The protein belongs to the herpesviridae large tegument protein family. As to quaternary structure, interacts with host CUL1 and CUL4A; these interactions inhibit the E3 ligase activity of cullins. Interacts with inner tegument protein. Interacts with capsid vertex specific component CVC2. Interacts with the major capsid protein/MCP.

Its subcellular location is the virion tegument. The protein localises to the host cytoplasm. It is found in the host nucleus. It catalyses the reaction Thiol-dependent hydrolysis of ester, thioester, amide, peptide and isopeptide bonds formed by the C-terminal Gly of ubiquitin (a 76-residue protein attached to proteins as an intracellular targeting signal).. Functionally, large tegument protein that plays multiple roles in the viral cycle. During viral entry, remains associated with the capsid while most of the tegument is detached and participates in the capsid transport toward the host nucleus. Plays a role in the routing of the capsid at the nuclear pore complex and subsequent uncoating. Within the host nucleus, acts as a deneddylase and promotes the degradation of nuclear CRLs (cullin-RING ubiquitin ligases) and thereby stabilizes nuclear CRL substrates, while cytoplasmic CRLs remain unaffected. These modifications prevent host cell cycle S-phase progression and create a favorable environment allowing efficient viral genome replication. Participates later in the secondary envelopment of capsids. Indeed, plays a linker role for the association of the outer viral tegument to the capsids together with the inner tegument protein. This chain is Large tegument protein deneddylase, found in Equus caballus (Horse).